A 211-amino-acid chain; its full sequence is MAKVLYITAHPLNEEQSFSLAAGTAFIETYKEEHKDDEVIHLDLYKEEIPHIDAHVFSGWGKLQNNKGFEELSQEEQAKVGRLSELSEQFVAADKYVFVTPLWNFSFPPVLKAYIDAVAVAGKTFKYTEQGPVGLLTDKKALHIQARGGIYSEGPATDFEMGHRYLTAIMNFFGVPSFQGLFIEGHAAMPDKAQEIKEDGIRRAKELARTF.

17–19 (SFS) provides a ligand contact to FMN.

It belongs to the azoreductase type 1 family. In terms of assembly, homodimer. Requires FMN as cofactor.

It catalyses the reaction 2 a quinone + NADH + H(+) = 2 a 1,4-benzosemiquinone + NAD(+). It carries out the reaction N,N-dimethyl-1,4-phenylenediamine + anthranilate + 2 NAD(+) = 2-(4-dimethylaminophenyl)diazenylbenzoate + 2 NADH + 2 H(+). In terms of biological role, quinone reductase that provides resistance to thiol-specific stress caused by electrophilic quinones. Also exhibits azoreductase activity. Catalyzes the reductive cleavage of the azo bond in aromatic azo compounds to the corresponding amines. The protein is FMN-dependent NADH:quinone oxidoreductase 3 of Halalkalibacterium halodurans (strain ATCC BAA-125 / DSM 18197 / FERM 7344 / JCM 9153 / C-125) (Bacillus halodurans).